Consider the following 772-residue polypeptide: Calcium-binding mitochondrial carrier protein (772 aa).

The interval 1–377 (MFANRVRQAQ…SISDFEKSTG (377 aa)) is N-terminal domain. EF-hand domains are found at residues 132-165 (LDAD…ELMA), 166-201 (KPEA…SLDP), 235-270 (LQQE…VKLR), and 347-382 (ITPL…NINK). Ca(2+) is bound by residues D145, D147, T149, Y151, E156, D179, D181, N183, Y185, and D190. The Ca(2+) site is built by D360, N362, D364, K366, and D371. Residues 378-422 (LNINKIGGGTNYSDSYPSDSHVTIQNSSTTPSPSTPITNTAAAIA) form a linker loop domain region. The tract at residues 432–720 (AQQVLESIEN…KALLPDAEYK (289 aa)) is carrier domain. Solcar repeat units follow at residues 436-526 (LESI…LRDL), 535-616 (IYFP…MKTI), and 624-712 (LGPM…LQKA). The next 6 membrane-spanning stretches (helical) occupy residues 442–459 (FALG…VYPI), 501–520 (GILP…LTVN), 545–558 (GFAG…TNPL), 591–610 (GAGA…FPTY), 630–647 (LLAG…VTPA), and 687–706 (GALA…LVSY). Residues 721–772 (PPTNAPITQKDFDVIRGNTNTVQRVIDMESKFGTLHQTRDNNKSSNGGENKN) are C-terminal domain. Positions 751–772 (KFGTLHQTRDNNKSSNGGENKN) are disordered. Over residues 763–772 (KSSNGGENKN) the composition is skewed to low complexity.

It belongs to the mitochondrial carrier (TC 2.A.29) family. As to quaternary structure, homodimer (via N-terminus).

It is found in the mitochondrion inner membrane. Its function is as follows. Mitochondrial and calcium-binding carrier that catalyzes the calcium-dependent exchange of cytoplasmic glutamate with mitochondrial aspartate across the mitochondrial inner membrane. The chain is Calcium-binding mitochondrial carrier protein (mcfO) from Dictyostelium discoideum (Social amoeba).